The primary structure comprises 119 residues: Large ribosomal subunit protein uL18 (119 aa).

It belongs to the universal ribosomal protein uL18 family. In terms of assembly, part of the 50S ribosomal subunit; part of the 5S rRNA/L5/L18/L25 subcomplex. Contacts the 5S and 23S rRNAs.

This is one of the proteins that bind and probably mediate the attachment of the 5S RNA into the large ribosomal subunit, where it forms part of the central protuberance. The chain is Large ribosomal subunit protein uL18 from Clostridium botulinum (strain 657 / Type Ba4).